A 280-amino-acid polypeptide reads, in one-letter code: Secreted RxLR effector protein 39 (280 aa).

The N-terminal stretch at 1 to 19 is a signal peptide; sequence MRGAYYVAIALLIVASCSA. The RxLR-dEER signature appears at 49 to 70; it reads RVLRGSRDLKNKWAVHAGGEDR. The disordered stretch occupies residues 229-249; it reads EVKARSSKRQRTNPMLNNMDG.

This sequence belongs to the RxLR effector family.

Its subcellular location is the secreted. The protein localises to the host nucleus. Functionally, secreted effector that completely suppresses the host cell death induced by cell death-inducing proteins. This Plasmopara viticola (Downy mildew of grapevine) protein is Secreted RxLR effector protein 39.